The following is a 490-amino-acid chain: Betaine aldehyde dehydrogenase (490 aa).

Thr26, Ile27, and Asp93 together coordinate K(+). 150–152 (GAW) is an NAD(+) binding site. Lys162 functions as the Charge relay system in the catalytic mechanism. 176-179 (KPSE) serves as a coordination point for NAD(+). A K(+)-binding site is contributed by Val180. Position 230 to 233 (230 to 233 (GVAS)) interacts with NAD(+). K(+) is bound at residue Leu246. Catalysis depends on Glu252, which acts as the Proton acceptor. NAD(+)-binding residues include Gly254, Cys286, and Glu387. The active-site Nucleophile is Cys286. Position 286 is a cysteine sulfenic acid (-SOH) (Cys286). 2 residues coordinate K(+): Lys457 and Gly460. Glu464 serves as the catalytic Charge relay system.

The protein belongs to the aldehyde dehydrogenase family. As to quaternary structure, dimer of dimers. Requires K(+) as cofactor.

The enzyme catalyses betaine aldehyde + NAD(+) + H2O = glycine betaine + NADH + 2 H(+). Its pathway is amine and polyamine biosynthesis; betaine biosynthesis via choline pathway; betaine from betaine aldehyde: step 1/1. In terms of biological role, involved in the biosynthesis of the osmoprotectant glycine betaine. Catalyzes the irreversible oxidation of betaine aldehyde to the corresponding acid. This chain is Betaine aldehyde dehydrogenase, found in Escherichia coli O7:K1 (strain IAI39 / ExPEC).